The chain runs to 129 residues: uncharacterized protein (129 aa).

The span at 86 to 96 shows a compositional bias: acidic residues; that stretch reads NDGFSSDDEPE. Positions 86 to 116 are disordered; the sequence is NDGFSSDDEPEEHVILTEDNQGEPSETPQAT. Positions 103 to 116 are enriched in polar residues; the sequence is EDNQGEPSETPQAT.

Belongs to the asfivirus D129L family.

This is an uncharacterized protein from African swine fever virus (strain Badajoz 1971 Vero-adapted) (Ba71V).